The chain runs to 310 residues: Lipoyl synthase (310 aa).

Residues C45, C50, C56, C71, C75, C78, and S285 each coordinate [4Fe-4S] cluster. The region spanning 57–274 (WTKKHATVMI…GSIARAKGFL (218 aa)) is the Radical SAM core domain.

The protein belongs to the radical SAM superfamily. Lipoyl synthase family. Requires [4Fe-4S] cluster as cofactor.

It localises to the cytoplasm. It carries out the reaction [[Fe-S] cluster scaffold protein carrying a second [4Fe-4S](2+) cluster] + N(6)-octanoyl-L-lysyl-[protein] + 2 oxidized [2Fe-2S]-[ferredoxin] + 2 S-adenosyl-L-methionine + 4 H(+) = [[Fe-S] cluster scaffold protein] + N(6)-[(R)-dihydrolipoyl]-L-lysyl-[protein] + 4 Fe(3+) + 2 hydrogen sulfide + 2 5'-deoxyadenosine + 2 L-methionine + 2 reduced [2Fe-2S]-[ferredoxin]. The protein operates within protein modification; protein lipoylation via endogenous pathway; protein N(6)-(lipoyl)lysine from octanoyl-[acyl-carrier-protein]: step 2/2. Catalyzes the radical-mediated insertion of two sulfur atoms into the C-6 and C-8 positions of the octanoyl moiety bound to the lipoyl domains of lipoate-dependent enzymes, thereby converting the octanoylated domains into lipoylated derivatives. The polypeptide is Lipoyl synthase (Novosphingobium aromaticivorans (strain ATCC 700278 / DSM 12444 / CCUG 56034 / CIP 105152 / NBRC 16084 / F199)).